Here is a 120-residue protein sequence, read N- to C-terminus: Small ribosomal subunit protein eS24 (120 aa).

The interval 101–120 is disordered; sequence RDAGTKQKKGGSKGGQGAKG.

The protein belongs to the eukaryotic ribosomal protein eS24 family.

This is Small ribosomal subunit protein eS24 from Saccharolobus islandicus (strain Y.N.15.51 / Yellowstone #2) (Sulfolobus islandicus).